Reading from the N-terminus, the 522-residue chain is Putative ribose/galactose/methyl galactoside import ATP-binding protein (522 aa).

2 consecutive ABC transporter domains span residues 7-244 and 254-498; these read LEMV…VGRE and PKLG…TGQA. 39-46 provides a ligand contact to ATP; sequence GENGAGKS.

The protein belongs to the ABC transporter superfamily. Carbohydrate importer 2 (CUT2) (TC 3.A.1.2) family.

It localises to the cell membrane. The catalysed reaction is D-ribose(out) + ATP + H2O = D-ribose(in) + ADP + phosphate + H(+). It carries out the reaction D-galactose(out) + ATP + H2O = D-galactose(in) + ADP + phosphate + H(+). Functionally, part of an ABC transporter complex involved in carbohydrate import. Could be involved in ribose, galactose and/or methyl galactoside import. Responsible for energy coupling to the transport system. The protein is Putative ribose/galactose/methyl galactoside import ATP-binding protein of Halalkalibacterium halodurans (strain ATCC BAA-125 / DSM 18197 / FERM 7344 / JCM 9153 / C-125) (Bacillus halodurans).